Reading from the N-terminus, the 207-residue chain is Small ribosomal subunit protein uS4 (207 aa).

Positions 96-156 (SRLDNTVYRM…KKSHKQSRIR (61 aa)) constitute an S4 RNA-binding domain.

Belongs to the universal ribosomal protein uS4 family. In terms of assembly, part of the 30S ribosomal subunit. Contacts protein S5. The interaction surface between S4 and S5 is involved in control of translational fidelity.

In terms of biological role, one of the primary rRNA binding proteins, it binds directly to 16S rRNA where it nucleates assembly of the body of the 30S subunit. With S5 and S12 plays an important role in translational accuracy. The protein is Small ribosomal subunit protein uS4 of Blochmanniella pennsylvanica (strain BPEN).